Consider the following 871-residue polypeptide: uncharacterized protein (871 aa).

A run of 11 helical transmembrane segments spans residues 11-31 (AFVS…GLFL), 92-112 (YLFT…PILL), 139-159 (FYAH…IIYR), 380-400 (TILT…GCIS), 422-442 (LLGI…MSLV), 475-495 (VQVF…VQVI), 520-540 (FLLQ…TLLL), 562-582 (LSAP…TIMI), 586-606 (IIAP…YFAY), 629-649 (LFQV…LFVL), and 653-673 (WGAT…HLYF). Serine 725, serine 726, serine 727, serine 729, serine 737, and serine 761 each carry phosphoserine. A compositionally biased stretch (polar residues) spans 727 to 740 (SGSDEFLETSSRTS). The tract at residues 727 to 746 (SGSDEFLETSSRTSENTKEK) is disordered.

Belongs to the CSC1 (TC 1.A.17) family.

It localises to the golgi apparatus membrane. Functionally, acts as an osmosensitive calcium-permeable cation channel. This is an uncharacterized protein from Schizosaccharomyces pombe (strain 972 / ATCC 24843) (Fission yeast).